Consider the following 806-residue polypeptide: Volume-regulated anion channel subunit LRRC8E (806 aa).

The Cytoplasmic segment spans residues Met-1–Pro-22. A helical transmembrane segment spans residues Trp-23 to Cys-43. Residues Thr-44–Lys-130 are Extracellular-facing. A disulfide bond links Cys-54 and Cys-311. N-linked (GlcNAc...) asparagine glycosylation is found at Asn-57 and Asn-80. The interval Gln-75 to Leu-104 is disordered. A helical transmembrane segment spans residues Tyr-131–Phe-151. Residues Lys-152–Lys-275 lie on the Cytoplasmic side of the membrane. The disordered stretch occupies residues Glu-182 to Leu-217. Positions Ser-188–Phe-207 are enriched in basic and acidic residues. Residues Phe-276–Cys-296 traverse the membrane as a helical segment. Over Ser-297–Ala-323 the chain is Extracellular. N-linked (GlcNAc...) asparagine glycosylation is present at Asn-312. The helical transmembrane segment at Ile-324 to Leu-344 threads the bilayer. At Phe-345–Asp-806 the chain is on the cytoplasmic side. LRR repeat units lie at residues His-569–Lys-589, Leu-593–Leu-614, Asn-616–Gln-637, Lys-641–Leu-662, Gly-664–Cys-685, Lys-687–Leu-708, Leu-710–Cys-731, Lys-733–Leu-754, and Cys-756–Cys-777.

It belongs to the LRRC8 family. Heterohexamer; oligomerizes with other LRRC8 proteins (lrrc8a, lrrc8c, lrrc8d and/or lrrc8b) to form a heterohexamer. Detected in a channel complex that contains lrrc8a, lrrc8c and lrrc8e. In vivo, the subunit composition may depend primarily on expression levels, and heterooligomeric channels containing various proportions of the different LRRC8 proteins may coexist.

The protein localises to the cell membrane. Its subcellular location is the endoplasmic reticulum membrane. The protein resides in the lysosome membrane. It carries out the reaction chloride(in) = chloride(out). The catalysed reaction is iodide(out) = iodide(in). The enzyme catalyses taurine(out) = taurine(in). It catalyses the reaction 2',3'-cGAMP(out) = 2',3'-cGAMP(in). Functionally, non-essential component of the volume-regulated anion channel (VRAC, also named VSOAC channel), an anion channel required to maintain a constant cell volume in response to extracellular or intracellular osmotic changes. The VRAC channel conducts iodide better than chloride and can also conduct organic osmolytes like taurine. Mediates efflux of amino acids, such as aspartate, in response to osmotic stress. The VRAC channel also mediates transport of immunoreactive cyclic dinucleotide GMP-AMP (2'-3'-cGAMP), an immune messenger produced in response to DNA virus in the cytosol. Channel activity requires lrrc8a plus at least one other family member (lrrc8b, lrrc8c, lrrc8d or lrrc8e); channel characteristics depend on the precise subunit composition. Also plays a role in lysosome homeostasis by forming functional lysosomal VRAC channels in response to low cytoplasmic ionic strength condition: lysosomal VRAC channels are necessary for the formation of large lysosome-derived vacuoles, which store and then expel excess water to maintain cytosolic water homeostasis. This chain is Volume-regulated anion channel subunit LRRC8E, found in Xenopus laevis (African clawed frog).